The chain runs to 197 residues: LexA repressor (197 aa).

Positions 28–47 (VREIARRFRITPRGALLHLI) form a DNA-binding region, H-T-H motif. Residues serine 119 and lysine 156 each act as for autocatalytic cleavage activity in the active site.

Belongs to the peptidase S24 family. In terms of assembly, homodimer.

The enzyme catalyses Hydrolysis of Ala-|-Gly bond in repressor LexA.. Functionally, represses a number of genes involved in the response to DNA damage (SOS response), including recA and lexA. In the presence of single-stranded DNA, RecA interacts with LexA causing an autocatalytic cleavage which disrupts the DNA-binding part of LexA, leading to derepression of the SOS regulon and eventually DNA repair. This chain is LexA repressor, found in Thermotoga maritima (strain ATCC 43589 / DSM 3109 / JCM 10099 / NBRC 100826 / MSB8).